Here is an 80-residue protein sequence, read N- to C-terminus: Conotoxin SmIVA (80 aa).

The signal sequence occupies residues 1-21 (MGMRMMFTVFLLVVLATTVVS). A propeptide spanning residues 22-38 (IPSDRASDGRNAAVNER) is cleaved from the precursor. Gln39 carries the pyrrolidone carboxylic acid modification. Residue Ser45 is glycosylated (O-linked (HexNAc...) serine). 4 positions are modified to 4-hydroxyproline: Pro55, Pro60, Pro70, and Pro72. The residue at position 75 (Ser75) is a Serine amide. Positions 76–80 (GRRND) are excised as a propeptide.

Belongs to the conotoxin A superfamily. Contains 3 disulfide bonds. In terms of tissue distribution, expressed by the venom duct.

The protein resides in the secreted. Neurotoxin with probable activity on sodium channel. Induces intense repetitive firing of the frog neuromuscular junction, leading to a tetanic contracture in muscle fiber (spastic paralysis). In vivo, shows the same effect as the whole venom when injected on fish prey. The polypeptide is Conotoxin SmIVA (Conus stercusmuscarum (Fly-specked cone)).